The primary structure comprises 1036 residues: Presequence protease, mitochondrial (1036 aa).

The transit peptide at 1–15 (MWRFSGRRGLCAVQR) directs the protein to the mitochondrion. Position 104 (H104) interacts with Zn(2+). E107 functions as the Proton acceptor in the catalytic mechanism. The Zn(2+) site is built by H108 and E205. C119 and C556 form a disulfide bridge. N6-acetyllysine is present on K759. Residue K770 is modified to N6-acetyllysine; alternate. K770 is modified (N6-succinyllysine; alternate). The tract at residues 806-833 (SKKERKPVRPHIVEKPTPSGPSGAAHVS) is disordered. At K848 the chain carries N6-succinyllysine. K883 is modified (N6-acetyllysine). K945 carries the N6-succinyllysine modification.

The protein belongs to the peptidase M16 family. PreP subfamily. As to quaternary structure, monomer and homodimer; homodimerization is induced by binding of the substrate. The cofactor is Zn(2+). In terms of processing, a disulfide bond locks the enzyme in the closed conformation preventing substrate entry into the catalytic chamber.

It is found in the mitochondrion matrix. Mainly exists in a closed and catalytically competent conformation but a closed-to-open switch allows substrate entry into the catalytic chamber. Substrate binding induces closure and dimerization. A disulfide bond may lock the enzyme in a closed conformation preventing substrate entry into the catalytic chamber, participating in redox regulation of the enzyme. Inhibited by metal-chelating agents. Inhibited by nickel and zinc excess, and slightly activated by manganese. Functionally, metalloendopeptidase of the mitochondrial matrix that functions in peptide cleavage and degradation rather than in protein processing. Has an ATP-independent activity. Specifically cleaves peptides in the range of 5 to 65 residues. Shows a preference for cleavage after small polar residues and before basic residues, but without any positional preference. Degrades the transit peptides of mitochondrial proteins after their cleavage. Also degrades other unstructured peptides. It is also able to degrade amyloid-beta protein 40, one of the peptides produced by APP processing, when it accumulates in mitochondrion. It is a highly efficient protease, at least toward amyloid-beta protein 40. Cleaves that peptide at a specific position and is probably not processive, releasing digested peptides intermediates that can be further cleaved subsequently. It is also able to degrade amyloid-beta protein 42. In Mus musculus (Mouse), this protein is Presequence protease, mitochondrial.